Here is a 39-residue protein sequence, read N- to C-terminus: MKVRPSVKKMCDACRVIKRNGRTMIICSANPKHKQRAGK.

It belongs to the bacterial ribosomal protein bL36 family.

In Leuconostoc mesenteroides subsp. mesenteroides (strain ATCC 8293 / DSM 20343 / BCRC 11652 / CCM 1803 / JCM 6124 / NCDO 523 / NBRC 100496 / NCIMB 8023 / NCTC 12954 / NRRL B-1118 / 37Y), this protein is Large ribosomal subunit protein bL36.